Consider the following 366-residue polypeptide: UDP-N-acetylenolpyruvoylglucosamine reductase (366 aa).

Positions 29 to 203 (VGPVARTLVT…LEVEFALDAS (175 aa)) constitute an FAD-binding PCMH-type domain. Residue Arg177 is part of the active site. Catalysis depends on Ser258, which acts as the Proton donor. Glu358 is a catalytic residue.

It belongs to the MurB family. FAD is required as a cofactor.

Its subcellular location is the cytoplasm. The catalysed reaction is UDP-N-acetyl-alpha-D-muramate + NADP(+) = UDP-N-acetyl-3-O-(1-carboxyvinyl)-alpha-D-glucosamine + NADPH + H(+). Its pathway is cell wall biogenesis; peptidoglycan biosynthesis. Its function is as follows. Cell wall formation. The polypeptide is UDP-N-acetylenolpyruvoylglucosamine reductase (Mycobacterium marinum (strain ATCC BAA-535 / M)).